The sequence spans 221 residues: Phosphoenolpyruvate guanylyltransferase (221 aa).

Phosphoenolpyruvate is bound by residues Thr154, Gly169, and Ser172.

It belongs to the CofC family.

The enzyme catalyses phosphoenolpyruvate + GTP + H(+) = enolpyruvoyl-2-diphospho-5'-guanosine + diphosphate. The protein operates within cofactor biosynthesis; coenzyme F420 biosynthesis. Its function is as follows. Guanylyltransferase that catalyzes the activation of phosphoenolpyruvate (PEP) as enolpyruvoyl-2-diphospho-5'-guanosine, via the condensation of PEP with GTP. It is involved in the biosynthesis of coenzyme F420, a hydride carrier cofactor. This is Phosphoenolpyruvate guanylyltransferase from Mycolicibacterium smegmatis (strain ATCC 700084 / mc(2)155) (Mycobacterium smegmatis).